The sequence spans 253 residues: Low affinity immunoglobulin gamma Fc region receptor III-A (253 aa).

The N-terminal stretch at 1 to 20 is a signal peptide; the sequence is MGQPLPPVALLLLVSASSRA. Residues 21–207 lie on the Extracellular side of the membrane; it reads ADVPKALVLL…ISSSVLPWHQ (187 aa). 2 consecutive Ig-like C2-type domains span residues 24–90 and 99–189; these read PKAL…YRCQ and PVQL…VTIT. Disulfide bonds link C47/C89 and C128/C172. Residues N56, N63, N165, and N180 are each glycosylated (N-linked (GlcNAc...) asparagine). Residues 208–226 form a helical membrane-spanning segment; it reads IAFCLVMGLLLAADTGLYF. The Cytoplasmic segment spans residues 227–253; the sequence is SVQRDLRSSQRARKEHTLGWSLGSQDK.

As to quaternary structure, forms a heterooligomeric complex with ITAM-containing signaling subunits FCER1G. Interacts (via transmembrane domain) with signaling subunits; this interaction is a prerequisite for receptor complex expression on the cell surface and intracellular signal transduction. Binds the Fc region of antigen-complexed IgG.

Its subcellular location is the cell membrane. In terms of biological role, receptor for the invariable Fc fragment of immunoglobulin gamma (IgG). Optimally activated upon binding of clustered antigen-IgG complexes displayed on cell surfaces, triggers lysis of antibody-coated cells, a process known as antibody-dependent cellular cytotoxicity (ADCC). Does not bind free monomeric IgG, thus avoiding inappropriate effector cell activation in the absence of antigenic trigger. Mediates IgG effector functions on natural killer (NK) cells. Binds antigen-IgG complexes generated upon infection and triggers NK cell-dependent cytokine production and degranulation to limit viral load and propagation. Fc-binding subunit that associates with FCER1G adapter to form functional signaling complexes. Following the engagement of antigen-IgG complexes, triggers phosphorylation of immunoreceptor tyrosine-based activation motif (ITAM)-containing adapters with subsequent activation of phosphatidylinositol 3-kinase signaling and sustained elevation of intracellular calcium that ultimately drive NK cell activation. Mediates enhanced ADCC in response to afucosylated IgGs. This is Low affinity immunoglobulin gamma Fc region receptor III-A from Oryctolagus cuniculus (Rabbit).